A 315-amino-acid chain; its full sequence is MLQEIDIKSLKGKSKVVRLKIKPDSERLPIKKPNWIRIKHVASQKVEQLKKTLRSQKLFTVCEEAQCPNLSECFNHGAATFMIMGQICTRRCPFCDVAHGKPKALDVDEPKHLANTIKKMQLKYVVITSVDRDDLRDGGAQHFKTCIDNIRLSTPKVKIEILTPDFRGRIDKVLEVFKSCSPNVFNHNLETVPSLYQKVRPGANYNYSLRLLKAFKQQHPFVITKSGLMLGVGESEKQVINVLKDLRKHNVDMLTLGQYLQPSKHHLAVEAYIHPNQFDKYKKIALKLGFSQVASGPMVRSSYHADLQIKGELIS.

Positions 62, 67, 73, 88, 92, 95, and 302 each coordinate [4Fe-4S] cluster. The Radical SAM core domain maps to 74 to 291 (FNHGAATFMI…KKIALKLGFS (218 aa)).

This sequence belongs to the radical SAM superfamily. Lipoyl synthase family. Requires [4Fe-4S] cluster as cofactor.

It is found in the cytoplasm. The catalysed reaction is [[Fe-S] cluster scaffold protein carrying a second [4Fe-4S](2+) cluster] + N(6)-octanoyl-L-lysyl-[protein] + 2 oxidized [2Fe-2S]-[ferredoxin] + 2 S-adenosyl-L-methionine + 4 H(+) = [[Fe-S] cluster scaffold protein] + N(6)-[(R)-dihydrolipoyl]-L-lysyl-[protein] + 4 Fe(3+) + 2 hydrogen sulfide + 2 5'-deoxyadenosine + 2 L-methionine + 2 reduced [2Fe-2S]-[ferredoxin]. It functions in the pathway protein modification; protein lipoylation via endogenous pathway; protein N(6)-(lipoyl)lysine from octanoyl-[acyl-carrier-protein]: step 2/2. Catalyzes the radical-mediated insertion of two sulfur atoms into the C-6 and C-8 positions of the octanoyl moiety bound to the lipoyl domains of lipoate-dependent enzymes, thereby converting the octanoylated domains into lipoylated derivatives. The chain is Lipoyl synthase from Ruthia magnifica subsp. Calyptogena magnifica.